We begin with the raw amino-acid sequence, 356 residues long: RuBisCO accumulation factor 1 (356 aa).

Positions 9–192 (LSEEERQELL…RALIEALLLD (184 aa)) are N-terminal alpha-helix. The segment at 216-342 (PRLLPFAGTL…LVLILRPKRV (127 aa)) is C-terminal beta-sheet.

Belongs to the RAF family. As to quaternary structure, homodimer. Forms an RbcL(8)-Raf1(8) complex. Forms complexes of many stoichiometries with RbcL with and without RbcS. RbcX and Raf1 can bind simultaneously to RbcL.

It localises to the cytoplasm. Functionally, a major RuBisCO chaperone. Acts after GroEL-GroES chaperonin to fold and/or assemble the large subunit of RuBisCO (ccbL, rbcL). Cooperates with RbcX in RbcL folding, plays the major role in assembly of dimers into RbcL(8)-Raf1(8) intermediate complexes. RbcS replaces Raf1, leading to holoenzyme formation. The Raf1 dimer brackets an RbcL dimer, leading to RbcL(8)-Raf1(8) complex formation. RbcS displaces Raf1, resulting in holoenzyme formation. Probably plays a role in early carboxysome assembly; in its absence CcaA, CcmM, CcmN, RbcL and RbcS colocalize in small patches while the shell proteins CcmK2, CcmK3 and CcmK4 are found diffused in the cytoplasm. Its function is as follows. It has been suggested that Raf1 and RbcX are partially functionally redundant. Other evidence suggests they are antagonistic in mediating RuBisCO assembly. This is RuBisCO accumulation factor 1 from Synechococcus elongatus (strain ATCC 33912 / PCC 7942 / FACHB-805) (Anacystis nidulans R2).